A 339-amino-acid polypeptide reads, in one-letter code: MEITLFDPIDAHLHVREGVLLKAVLKYSSEPFSAAVIMPNLSKPLIDTQITLEYEGEILKNSSNFKPLMSLYFNDGLTLEELQHAKHQGIKFLKLYPKGMTTNAQNGTSDLLGEKTLEILEDAQKLGFILCIHAEQAGFCLDKEFLCHSVLETFAHSFPKLKIIIEHLSDWRSIALIEKHDNLYATLTLHHISMTLDDLLGGSLNPHCFCKPLIKTQKDQERLLSLALKAHPKISFGSDSAPHVISKKHSANIPAGIFSAPILLPALCELFEKHNALENLQAFISDNAKKIYTLDNLPSKKVRLSKKPFIVPTHTLCLNEKIAILREGETLSWNIQEIA.

Residues H12 and H14 each coordinate Zn(2+). Substrate contacts are provided by residues 14–16 (HVR) and N40. Residues K94, H133, H167, and D239 each coordinate Zn(2+). N6-carboxylysine is present on K94. H133 contacts substrate. D239 is an active-site residue. Positions 243 and 255 each coordinate substrate.

It belongs to the metallo-dependent hydrolases superfamily. DHOase family. Class II DHOase subfamily. In terms of assembly, homodimer. The cofactor is Zn(2+).

The catalysed reaction is (S)-dihydroorotate + H2O = N-carbamoyl-L-aspartate + H(+). It functions in the pathway pyrimidine metabolism; UMP biosynthesis via de novo pathway; (S)-dihydroorotate from bicarbonate: step 3/3. In terms of biological role, catalyzes the reversible cyclization of carbamoyl aspartate to dihydroorotate. This Helicobacter acinonychis (strain Sheeba) protein is Dihydroorotase.